A 384-amino-acid polypeptide reads, in one-letter code: Cell division protein FtsZ (384 aa).

Residues 20–24 (GGGGN), 107–109 (GTG), glutamate 138, arginine 142, and asparagine 186 contribute to the GTP site.

It belongs to the FtsZ family. In terms of assembly, homodimer. Polymerizes to form a dynamic ring structure in a strictly GTP-dependent manner. Interacts directly with several other division proteins.

It is found in the cytoplasm. Essential cell division protein that forms a contractile ring structure (Z ring) at the future cell division site. The regulation of the ring assembly controls the timing and the location of cell division. One of the functions of the FtsZ ring is to recruit other cell division proteins to the septum to produce a new cell wall between the dividing cells. Binds GTP and shows GTPase activity. This is Cell division protein FtsZ from Buchnera aphidicola subsp. Schizaphis graminum (strain Sg).